We begin with the raw amino-acid sequence, 336 residues long: tRNA(Ile)-lysidine synthase (336 aa).

Residue 32–37 (SGGQDS) participates in ATP binding.

It belongs to the tRNA(Ile)-lysidine synthase family.

The protein resides in the cytoplasm. The catalysed reaction is cytidine(34) in tRNA(Ile2) + L-lysine + ATP = lysidine(34) in tRNA(Ile2) + AMP + diphosphate + H(+). Its function is as follows. Ligates lysine onto the cytidine present at position 34 of the AUA codon-specific tRNA(Ile) that contains the anticodon CAU, in an ATP-dependent manner. Cytidine is converted to lysidine, thus changing the amino acid specificity of the tRNA from methionine to isoleucine. This chain is tRNA(Ile)-lysidine synthase, found in Synechococcus sp. (strain JA-3-3Ab) (Cyanobacteria bacterium Yellowstone A-Prime).